Here is a 951-residue protein sequence, read N- to C-terminus: Bifunctional glutamine synthetase adenylyltransferase/adenylyl-removing enzyme (951 aa).

The adenylyl removase stretch occupies residues 1-440 (MLPLPSELQI…VFDDLIGDET (440 aa)). Residues 449-951 (HGLYKSLWQD…WLAANDANVS (503 aa)) form an adenylyl transferase region.

It belongs to the GlnE family. The cofactor is Mg(2+).

The enzyme catalyses [glutamine synthetase]-O(4)-(5'-adenylyl)-L-tyrosine + phosphate = [glutamine synthetase]-L-tyrosine + ADP. It catalyses the reaction [glutamine synthetase]-L-tyrosine + ATP = [glutamine synthetase]-O(4)-(5'-adenylyl)-L-tyrosine + diphosphate. Its function is as follows. Involved in the regulation of glutamine synthetase GlnA, a key enzyme in the process to assimilate ammonia. When cellular nitrogen levels are high, the C-terminal adenylyl transferase (AT) inactivates GlnA by covalent transfer of an adenylyl group from ATP to specific tyrosine residue of GlnA, thus reducing its activity. Conversely, when nitrogen levels are low, the N-terminal adenylyl removase (AR) activates GlnA by removing the adenylyl group by phosphorolysis, increasing its activity. The regulatory region of GlnE binds the signal transduction protein PII (GlnB) which indicates the nitrogen status of the cell. This chain is Bifunctional glutamine synthetase adenylyltransferase/adenylyl-removing enzyme, found in Yersinia pseudotuberculosis serotype O:1b (strain IP 31758).